Reading from the N-terminus, the 433-residue chain is Phosphomethylpyrimidine synthase (433 aa).

Residues Asn-66, Met-94, Tyr-123, His-162, Ser-184–Gly-186, Asp-225–Arg-228, and Glu-264 each bind substrate. His-268 lines the Zn(2+) pocket. Tyr-291 provides a ligand contact to substrate. Residue His-332 coordinates Zn(2+). The [4Fe-4S] cluster site is built by Cys-408, Cys-411, and Cys-415.

It belongs to the ThiC family. The cofactor is [4Fe-4S] cluster.

The catalysed reaction is 5-amino-1-(5-phospho-beta-D-ribosyl)imidazole + S-adenosyl-L-methionine = 4-amino-2-methyl-5-(phosphooxymethyl)pyrimidine + CO + 5'-deoxyadenosine + formate + L-methionine + 3 H(+). It functions in the pathway cofactor biosynthesis; thiamine diphosphate biosynthesis. Its function is as follows. Catalyzes the synthesis of the hydroxymethylpyrimidine phosphate (HMP-P) moiety of thiamine from aminoimidazole ribotide (AIR) in a radical S-adenosyl-L-methionine (SAM)-dependent reaction. The polypeptide is Phosphomethylpyrimidine synthase (Saccharolobus islandicus (strain M.16.27) (Sulfolobus islandicus)).